Here is a 98-residue protein sequence, read N- to C-terminus: Aspartyl/glutamyl-tRNA(Asn/Gln) amidotransferase subunit C (98 aa).

This sequence belongs to the GatC family. In terms of assembly, heterotrimer of A, B and C subunits.

The catalysed reaction is L-glutamyl-tRNA(Gln) + L-glutamine + ATP + H2O = L-glutaminyl-tRNA(Gln) + L-glutamate + ADP + phosphate + H(+). It carries out the reaction L-aspartyl-tRNA(Asn) + L-glutamine + ATP + H2O = L-asparaginyl-tRNA(Asn) + L-glutamate + ADP + phosphate + 2 H(+). Functionally, allows the formation of correctly charged Asn-tRNA(Asn) or Gln-tRNA(Gln) through the transamidation of misacylated Asp-tRNA(Asn) or Glu-tRNA(Gln) in organisms which lack either or both of asparaginyl-tRNA or glutaminyl-tRNA synthetases. The reaction takes place in the presence of glutamine and ATP through an activated phospho-Asp-tRNA(Asn) or phospho-Glu-tRNA(Gln). The sequence is that of Aspartyl/glutamyl-tRNA(Asn/Gln) amidotransferase subunit C from Roseiflexus castenholzii (strain DSM 13941 / HLO8).